We begin with the raw amino-acid sequence, 105 residues long: Large ribosomal subunit protein bL21 (105 aa).

Belongs to the bacterial ribosomal protein bL21 family. As to quaternary structure, part of the 50S ribosomal subunit. Contacts protein L20.

This protein binds to 23S rRNA in the presence of protein L20. This is Large ribosomal subunit protein bL21 from Rhizobium etli (strain CIAT 652).